Here is a 242-residue protein sequence, read N- to C-terminus: N-glycosylase/DNA lyase (242 aa).

Residues Gln-25, Ser-52, and Trp-63 each contribute to the 8-oxoguanine site. A helix-hairpin-helix region spans residues 119 to 183 (KSYYRDMNRL…VDARIERITR (65 aa)). Catalysis depends on Lys-143, which acts as the Schiff-base intermediate with DNA. 2 residues coordinate 8-oxoguanine: Phe-147 and Pro-173. Asp-175 is a catalytic residue. Residues Asp-209 and Trp-213 each coordinate 8-oxoguanine.

Belongs to the archaeal N-glycosylase/DNA lyase (AGOG) family.

It carries out the reaction 2'-deoxyribonucleotide-(2'-deoxyribose 5'-phosphate)-2'-deoxyribonucleotide-DNA = a 3'-end 2'-deoxyribonucleotide-(2,3-dehydro-2,3-deoxyribose 5'-phosphate)-DNA + a 5'-end 5'-phospho-2'-deoxyribonucleoside-DNA + H(+). In terms of biological role, DNA repair enzyme that is part of the base excision repair (BER) pathway; protects from oxidative damage by removing the major product of DNA oxidation, 8-oxoguanine (GO), from single- and double-stranded DNA substrates. This Methanopyrus kandleri (strain AV19 / DSM 6324 / JCM 9639 / NBRC 100938) protein is N-glycosylase/DNA lyase.